The chain runs to 238 residues: Ribosomal RNA small subunit methyltransferase G (238 aa).

Residues glycine 78, phenylalanine 83, 129 to 130, and arginine 148 contribute to the S-adenosyl-L-methionine site; that span reads AE. Positions 217–238 are disordered; that stretch reads KKKETPKKYPRKAGTPAKSPIK.

This sequence belongs to the methyltransferase superfamily. RNA methyltransferase RsmG family.

It is found in the cytoplasm. Specifically methylates the N7 position of a guanine in 16S rRNA. This Lactococcus lactis subsp. cremoris (strain MG1363) protein is Ribosomal RNA small subunit methyltransferase G.